The sequence spans 145 residues: D-aminoacyl-tRNA deacylase (145 aa).

A Gly-cisPro motif, important for rejection of L-amino acids motif is present at residues Gly-137–Pro-138.

This sequence belongs to the DTD family. As to quaternary structure, homodimer.

The protein resides in the cytoplasm. The catalysed reaction is glycyl-tRNA(Ala) + H2O = tRNA(Ala) + glycine + H(+). The enzyme catalyses a D-aminoacyl-tRNA + H2O = a tRNA + a D-alpha-amino acid + H(+). An aminoacyl-tRNA editing enzyme that deacylates mischarged D-aminoacyl-tRNAs. Also deacylates mischarged glycyl-tRNA(Ala), protecting cells against glycine mischarging by AlaRS. Acts via tRNA-based rather than protein-based catalysis; rejects L-amino acids rather than detecting D-amino acids in the active site. By recycling D-aminoacyl-tRNA to D-amino acids and free tRNA molecules, this enzyme counteracts the toxicity associated with the formation of D-aminoacyl-tRNA entities in vivo and helps enforce protein L-homochirality. This Salmonella agona (strain SL483) protein is D-aminoacyl-tRNA deacylase.